We begin with the raw amino-acid sequence, 231 residues long: Large ribosomal subunit protein uL1 (231 aa).

This sequence belongs to the universal ribosomal protein uL1 family. As to quaternary structure, part of the 50S ribosomal subunit.

In terms of biological role, binds directly to 23S rRNA. The L1 stalk is quite mobile in the ribosome, and is involved in E site tRNA release. Functionally, protein L1 is also a translational repressor protein, it controls the translation of the L11 operon by binding to its mRNA. The protein is Large ribosomal subunit protein uL1 of Halorhodospira halophila (strain DSM 244 / SL1) (Ectothiorhodospira halophila (strain DSM 244 / SL1)).